The chain runs to 115 residues: MASPVVSLLLVGICALAFVHVARSECCTSRELVEFKMDRGDCEAVRAIENYPNGCEVTICADGVAQLGAYCGQGSCNIFGCNCDGGCLSGDWSQEFVRRNQQYGIQIIKVTRLPF.

The first 24 residues, 1-24 (MASPVVSLLLVGICALAFVHVARS), serve as a signal peptide directing secretion. 5 disulfide bridges follow: cysteine 26/cysteine 81, cysteine 27/cysteine 87, cysteine 42/cysteine 55, cysteine 60/cysteine 71, and cysteine 76/cysteine 83.

The protein belongs to the Diedel family. In terms of tissue distribution, detected in hemolymph (at protein level). Also expressed in the fat body and is probably synthesized in the fat body and secreted into the hemolymph.

Its subcellular location is the secreted. Functionally, cytokine which promotes survival following infection by Sindbis virus by suppressing the immune deficiency pathway. Following infection by the enteropathogenic bacteria E.carotovora limits intestinal stem cells proliferation. When secreted from muscle or adipose tissue, can attenuate age-related intestinal tissue degeneration by inhibiting apoptosis. This chain is Protein Diedel, found in Drosophila melanogaster (Fruit fly).